Reading from the N-terminus, the 208-residue chain is Small ribosomal subunit protein eS8 (208 aa).

The interval 1-27 (MGISRDNWHKRRRTGGKRKPVHKKRKY) is disordered. Positions 8 to 26 (WHKRRRTGGKRKPVHKKRK) are enriched in basic residues.

Belongs to the eukaryotic ribosomal protein eS8 family. Component of the small ribosomal subunit. Identified in a IGF2BP1-dependent mRNP granule complex containing untranslated mRNAs. Part of the small subunit (SSU) processome, composed of more than 70 proteins and the RNA chaperone small nucleolar RNA (snoRNA) U3.

It is found in the cytoplasm. Its subcellular location is the membrane. It localises to the nucleus. The protein localises to the nucleolus. In terms of biological role, component of the small ribosomal subunit. The ribosome is a large ribonucleoprotein complex responsible for the synthesis of proteins in the cell. Part of the small subunit (SSU) processome, first precursor of the small eukaryotic ribosomal subunit. During the assembly of the SSU processome in the nucleolus, many ribosome biogenesis factors, an RNA chaperone and ribosomal proteins associate with the nascent pre-rRNA and work in concert to generate RNA folding, modifications, rearrangements and cleavage as well as targeted degradation of pre-ribosomal RNA by the RNA exosome. The protein is Small ribosomal subunit protein eS8 (rps8) of Danio rerio (Zebrafish).